A 397-amino-acid chain; its full sequence is MTTLLNPYFGEFGGMYVPQILMPALRQLEEAFVSAQKDPEFQAQFNDLLKNYAGRPTALTKCQNITAGTNTTLYLKREDLLHGGAHKTNQVLGQALLAKRMGKTKIIAETGAGQHGVASALASALLGLKCRIYMGAKDVERQSPNVFRMRLMGAEVIPVHSGSATLKDACNEALRDWSGSYETAHYMLGTAAGPHPYPTIVREFQRMIGEETKAQILEREGRLPDAVIACVGGGSNAIGMFADFINETDVGLIGVEPGGHGIETGEHGAPLKHGRVGIYFGMKAPMMQTEDGQIEESYSISAGLDFPSVGPQHAYLNSTGRADYVSITDDEALEAFKTLCLHEGIIPALESSHALAHALKMMRENPEKEQLLVVNLSGRGDKDIFTVHDILKARGEI.

An N6-(pyridoxal phosphate)lysine modification is found at K87.

Belongs to the TrpB family. Tetramer of two alpha and two beta chains. Pyridoxal 5'-phosphate is required as a cofactor.

It catalyses the reaction (1S,2R)-1-C-(indol-3-yl)glycerol 3-phosphate + L-serine = D-glyceraldehyde 3-phosphate + L-tryptophan + H2O. It functions in the pathway amino-acid biosynthesis; L-tryptophan biosynthesis; L-tryptophan from chorismate: step 5/5. Functionally, the beta subunit is responsible for the synthesis of L-tryptophan from indole and L-serine. In Escherichia coli O45:K1 (strain S88 / ExPEC), this protein is Tryptophan synthase beta chain.